Consider the following 720-residue polypeptide: KLSRGHSPLMKKVFDVYLCFLQKHQSEMALKNVFTALRSLIYKFPSTFYEGRADMCASLCYEVLKCCNSKLSSIRTEASQLLYFLMRNNFDYTGKKSFVRTHLQVIISLSQLIADVVGIGGTRFQQSLSIINNCANSDRLIKHTSFSSDVKDLTKRIRTVLMATAQMKEHENDPEMLVDLQYSLAKSYASTPELRKTWLDSMARIHVKNGDLSEAAMCYVHVTALVAEYLTRKEADLALQREPPVFPYSHTSCQRKSRGGMFRQGCTAFRVITPNIDEEASMMEDVGMQDVHFNEDVLMELLEQCADGLWKAERLRAGLLTSINSSSPSMKSGGTLETTHLYDTLHRPYSKVTEVITRAAGSWDLLPGGLFGQGFFEDEDGKEYIYKEPKLTPLSEISQRLLKLYSDKFGSENVKMIQDSGKVNPKDLDSKFAYIQVTHVTPFFDEKELQERKTEFERCHNIRRFMFEMPFTQTGKRQGGVEEQCKRRTILTAIHCFPYVKKRIPVMYQHHTDLNPIEVAIDEMSKKVAELHQLCSSAEVDMIKLQLKLQGSVSVQVNAGPLAYARAFLDDTNTKRYPDNKVKLLKEVFRQFVEACGQALAVNERLIKEDQLEYQEEMKANYREIRKELSDIIVPRICPGEDKRATKFPAHLQRHQRDTNKHSGSRVDQFILSCVTLPHEPHVGTCFVMCKLRTTFRANHWFCQAQEEAMGNGREKEPGL.

The DOCKER domain occupies 186-638 (KSYASTPELR…LSDIIVPRIC (453 aa)). The tract at residues 277–638 (DEEASMMEDV…LSDIIVPRIC (362 aa)) is interaction with CDC42.

It belongs to the DOCK family. Homodimer. Interacts preferentially with nucleotide-depleted CDC42.

It is found in the endomembrane system. Functionally, guanine nucleotide-exchange factor (GEF) that activates CDC42 by exchanging bound GDP for free GTP. Overexpression induces filopodia formation. The protein is Dedicator of cytokinesis protein 9 (Dock9) of Rattus norvegicus (Rat).